Consider the following 232-residue polypeptide: MPKRTTHTYSSEDAAPDGPDSDLFVYYCKHCGSHVLITDTQLQKMPKRKTDRSNVLDKKTHLARLNVSEGGKVLLKRGEGKMERQFRMNCIGCELFVCYRAEENLETASFIYIVDGALSAVAAETNPQDAPVPPCISQLDGGLVQVAIEVEDRAQRSAITRVNADDVRVTVAAPAARGEANNELLEFMGRVLGLRLSQMTLQRGWNSKSKLLVVEDLSARQVYEKLLEAVVP.

Belongs to the UPF0235 family. As to quaternary structure, interacts with CTN.

It localises to the nucleus speckle. May play a role during early embryonic development. Probably involved in pre-mRNA splicing. The chain is UPF0235 protein At5g63440 from Arabidopsis thaliana (Mouse-ear cress).